The following is a 364-amino-acid chain: Putative agmatine deiminase 1 (364 aa).

Residue Cys356 is the Amidino-cysteine intermediate of the active site.

It belongs to the agmatine deiminase family.

The catalysed reaction is agmatine + H2O = N-carbamoylputrescine + NH4(+). This chain is Putative agmatine deiminase 1, found in Listeria monocytogenes serotype 4b (strain F2365).